Reading from the N-terminus, the 494-residue chain is WD repeat-containing protein 37 (494 aa).

The interval 1–38 (MPTESGSWAAARQTKQKRKSHSLSIKRTNSSEQDRPGL) is disordered. The span at 22–31 (SLSIKRTNSS) shows a compositional bias: polar residues. WD repeat units lie at residues 154–194 (GHRD…CLIK) and 197–236 (GHAG…PTPQ). Positions 236 to 266 (QPTADTSISGEEEVDFSDKDENDGDGDASSD) are disordered. Acidic residues predominate over residues 245-263 (GEEEVDFSDKDENDGDGDA). WD repeat units follow at residues 279–318 (SHQG…LVHS), 321–360 (GHDQ…IHSV), 365–403 (GHTD…SPIA), 406–445 (RTDS…LARL), and 452–493 (GHRR…LLQE).

It is found in the cytoplasm. Its subcellular location is the nucleus. In Xenopus tropicalis (Western clawed frog), this protein is WD repeat-containing protein 37 (wdr37).